The chain runs to 286 residues: Forkhead box protein E3 (286 aa).

Positions 1-62 are disordered; sequence MDAHVAFSGF…GRRRRRPLQR (62 aa). A DNA-binding region (fork-head) is located at residues 64–158; it reads KPPYSYIALI…DNGSFLRRRK (95 aa).

Its subcellular location is the nucleus. Functionally, transcription factor that controls lens epithelial cell growth through regulation of proliferation, apoptosis and cell cycle. During lens development, controls the ratio of the lens fiber cells to the cells of the anterior lens epithelium by regulating the rate of proliferation and differentiation. Controls lens vesicle closure and subsequent separation of the lens vesicle from ectoderm. Controls the expression of DNAJB1 in a pathway that is crucial for the development of the anterior segment of the eye. This chain is Forkhead box protein E3 (Foxe3), found in Rattus norvegicus (Rat).